Reading from the N-terminus, the 334-residue chain is Retinol dehydrogenase 13 (334 aa).

Position 2 is an N-acetylserine (Ser2). 45–51 (GANTGIG) provides a ligand contact to NADP(+). Ser174 is a binding site for substrate. Residue Tyr200 is the Proton acceptor of the active site.

It belongs to the short-chain dehydrogenases/reductases (SDR) family.

The protein resides in the mitochondrion inner membrane. It catalyses the reaction all-trans-retinol + NADP(+) = all-trans-retinal + NADPH + H(+). It participates in cofactor metabolism; retinol metabolism. Functionally, retinol dehydrogenase with a clear preference for NADP. Oxidizes all-trans-retinol, but seems to reduce all-trans-retinal with much higher efficiency. Has no activity towards steroid. This Mus musculus (Mouse) protein is Retinol dehydrogenase 13 (Rdh13).